A 103-amino-acid chain; its full sequence is Nucleoid-associated protein Cgl0243/cg0297 (103 aa).

The protein belongs to the YbaB/EbfC family. Homodimer.

It is found in the cytoplasm. The protein resides in the nucleoid. Its function is as follows. Binds to DNA and alters its conformation. May be involved in regulation of gene expression, nucleoid organization and DNA protection. The polypeptide is Nucleoid-associated protein Cgl0243/cg0297 (Corynebacterium glutamicum (strain ATCC 13032 / DSM 20300 / JCM 1318 / BCRC 11384 / CCUG 27702 / LMG 3730 / NBRC 12168 / NCIMB 10025 / NRRL B-2784 / 534)).